Reading from the N-terminus, the 494-residue chain is Lysine--tRNA ligase (494 aa).

Residues E405 and E412 each coordinate Mg(2+).

Belongs to the class-II aminoacyl-tRNA synthetase family. Homodimer. Mg(2+) is required as a cofactor.

It is found in the cytoplasm. The catalysed reaction is tRNA(Lys) + L-lysine + ATP = L-lysyl-tRNA(Lys) + AMP + diphosphate. The sequence is that of Lysine--tRNA ligase (lysS) from Geobacillus stearothermophilus (Bacillus stearothermophilus).